The chain runs to 263 residues: Ribonuclease HII (263 aa).

An RNase H type-2 domain is found at 71–262; that stretch reads QAIAGIDEVG…VKSMCCDSTN (192 aa). Positions 77, 78, and 172 each coordinate a divalent metal cation.

It belongs to the RNase HII family. Mn(2+) is required as a cofactor. The cofactor is Mg(2+).

It localises to the cytoplasm. The catalysed reaction is Endonucleolytic cleavage to 5'-phosphomonoester.. Endonuclease that specifically degrades the RNA of RNA-DNA hybrids. The chain is Ribonuclease HII from Streptococcus pyogenes serotype M4 (strain MGAS10750).